The primary structure comprises 304 residues: MNPVNTKPYQLSADATWFVTGCSTGIGRAIASHVASQPGHRLIATARDPSSLSYLDDDNPAILKLAMDVTNPSSVNAAFKAAADYFGDKYYIDVVVNNAGYSLSGDTESVTEHEMHDEFETNFFGTVRVTLKAIEVMRQSKDHRGGLIFNISSLAGICAFPGHAFYHASKFAVEGWSESVAREMHPDWNIHFCIVEPSAVKTNFETTSKKRTQPHEAYAGADMPARQLETFVKKGLEAGVGFEPSAVANVLYKVASRNEKVPLRLPLSATAVKLITAKLQVQLQDLETVSELSAIDVHQVQFKV.

NADP(+)-binding residues include Ile-26, Thr-45, Asp-68, and Asn-98. The active-site Proton donor is Ser-152. NADP(+) is bound by residues Tyr-166, Lys-170, Val-200, and Thr-202. The active-site Proton acceptor is Tyr-166. Lys-170 functions as the Lowers pKa of active site Tyr in the catalytic mechanism.

Belongs to the short-chain dehydrogenases/reductases (SDR) family.

Its pathway is secondary metabolite biosynthesis. In terms of biological role, oxidoreductase; part of the gene cluster that mediates the biosynthesis of calbistrin A and related compounds. Calbistrin A is a secondary metabolite with an interesting structure that was recently found to have bioactivity against leukemia cells. It consists of two polyketides linked by an ester bond: a bicyclic decalin containing polyketide and a linear 12 carbon dioic acid structure. The polyketide synthase calA is probably responsible for forming the decalin moiety. Because calA lacks a designated enoylreductase (ER) domain, the required activity is provided by the trans-enoyl reductase calK. Following release from the PKS, calF then probably catalyzes the oxidation and the subsequent Diels Alder cycloisomerization that lead to the formation of the decalin moiety. The decalin polyketide backbone includes two C-methyl groups, at C7 and C11 in backbone, of which the C7 position is probably methylated by the methyltransferase domain of calA. A candidate for adding the methyl group at C11, if not done by CalA, is the cluster methyltransferase calH. Several additional tailoring enzymes within the cluster could be involved in the modification of the decalin polyketide product. Those include the 3 cytochrome P450 monooxygenases CalE, CalG and CalL, of which one might be responsible for the introduction of the extra hydroxyl group attached to the backbone of the decalin moiety, at position C9 in the backbone, that allows for attachment of the linear moiety. One tailoring enzyme activity that is expected to be involved in biosynthesis of calbistrin is an acyltransferase for connecting the two polyketide synthase products, and which could be performed by the cluster acyltransferase calJ. The enzyme responsible for the biosynthesis of the linear moiety, probably a second PKS, has not been identified yet. The sequence is that of Oxidoreductase calM from Penicillium decumbens.